A 10746-amino-acid chain; its full sequence is Extracellular matrix-binding protein ebh (10746 aa).

An N-terminal signal peptide occupies residues 1-39; sequence MNYRDKIQKFSIRKYTVGTFSTVIATLVFLGLNTSQAQA. 2 stretches are compositionally biased toward polar residues: residues 41-59 and 67-113; these read ETNQ…GDTQ and VQNS…SQNE. Disordered regions lie at residues 41–174, 246–274, and 1340–1372; these read ETNQ…GNVQ, MPQR…PRSV, and IAGN…DGQR. A compositionally biased stretch (low complexity) spans 120-130; it reads AAATPTQSAKA. Residues 132–158 show a composition bias toward basic and acidic residues; it reads SKHEQSESRAANKKENDNKATHVESHE. Residues 162-173 show a composition bias toward polar residues; sequence VTASDSSDSGNV. The segment covering 248-263 has biased composition (low complexity); it reads QRQQTSRRSSRIQTRS. Residues 1356-1372 show a composition bias toward polar residues; the sequence is YKTTGYSQSNPTSDGQR. FIVAR domains are found at residues 2520 to 2576, 2606 to 2662, 2683 to 2746, 2776 to 2832, 2860 to 2915, 2943 to 2998, 3026 to 3081, 3150 to 3208, 3276 to 3335, 3403 to 3461, 3529 to 3587, 3655 to 3713, 3781 to 3839, 3907 to 3965, 4033 to 4091, 4159 to 4217, 4285 to 4343, 4411 to 4469, 4537 to 4595, 4663 to 4721, 4789 to 4847, 4915 to 4973, 5041 to 5099, 5167 to 5225, 5293 to 5351, 5419 to 5477, 5545 to 5603, 5671 to 5729, 5797 to 5855, 5923 to 5981, 6049 to 6107, 6175 to 6232, 6300 to 6358, 6426 to 6484, 6552 to 6610, 6678 to 6736, 6804 to 6862, 6930 to 6988, 7056 to 7114, 7182 to 7240, 7308 to 7366, 7434 to 7492, 7560 to 7618, 7686 to 7744, 7812 to 7870, 7938 to 7996, 8064 to 8125, 8190 to 8251, 8316 to 8374, 8442 to 8500, 8568 to 8625, 8693 to 8751, 8819 to 8877, 8945 to 9003, 9071 to 9129, 9197 to 9255, 9323 to 9377, 9445 to 9504, and 9699 to 9755; these read AKNH…VNAA, SKNN…ISDE, DTHE…VQTA, AKTK…IAAK, AKTQ…IRQN, AKNQ…INTN, AKTQ…INDK, AMTK…VNQK, AMTG…VNNA, AMGN…VNSA, AMGN…VTEA, AMNT…ITQK, AMAS…VEAA, AMGN…VEQA, AMGQ…VTAA, AMKG…ITQA, QMGN…VEAA, AMAN…VENA, AMGT…INQI, AMGQ…VDRA, AMNS…VDNA, AMGA…INGM, AMTV…VNSA, AMHS…VEQA, AMGQ…VERA, AMTA…VTNA, AMKG…INQA, AMTN…VESA, AMSN…VEQA, AMNQ…INQK, AMGN…VQAA, AMGQ…VEAA, AMQR…VEQA, AMDQ…VTAA, AMNQ…VTQA, AMER…VEAA, AMGN…VEAA, AMDK…INQA, AMTQ…ITAA, AMTQ…IQQA, AMTN…VEQA, AMTQ…VAQA, AMGT…VTQA, AMSN…ITRA, AMDQ…ITNE, AMEL…VNRA, AMHG…INQA, LMDA…VTSA, AMKA…IDQA, AMEA…VEQL, AMQA…VEQL, AMET…VDQA, SMDQ…VDQA, VMDQ…VIKL, and AMET…INGA. A compositionally biased stretch (polar residues) spans 7066 to 7080; sequence DNATTKQNQNYTDSS. Residues 7066-7085 form a disordered region; the sequence is DNATTKQNQNYTDSSPNKKD. Polar residues predominate over residues 10492-10507; the sequence is DHSKPSSNSDGQSNSH. The interval 10492 to 10530 is disordered; sequence DHSKPSSNSDGQSNSHLHVGYGTVNHPFNSSPIGHKKKL. A helical transmembrane segment spans residues 10552-10572; sequence IKNALGVVGISGLLASFWFFI. A disordered region spans residues 10649–10746; it reads RRKEDEEDVE…KKKKSKKNKK (98 aa). Over residues 10664 to 10674 the composition is skewed to basic and acidic residues; that stretch reads TDEKVLQDNEH. The span at 10719–10746 shows a compositional bias: basic residues; that stretch reads KGKKSASKKPSKKVAAKKKKKKSKKNKK.

It is found in the cell membrane. This chain is Extracellular matrix-binding protein ebh (ebh), found in Staphylococcus aureus (strain MRSA252).